The chain runs to 790 residues: Choline transporter-like 2 (790 aa).

The helical transmembrane segment at 47–67 (PCLFLFVTFLCAWGYVAYYAV) threads the bilayer. N-linked (GlcNAc...) asparagine glycosylation is found at Asn-102 and Asn-259. The next 3 helical transmembrane spans lie at 288–308 (IITP…FQMI), 319–339 (ILVF…MLRW), and 344–364 (LVWI…YYSF). N-linked (GlcNAc...) asparagine glycosylation occurs at Asn-384. A run of 2 helical transmembrane segments spans residues 400-420 (LWIL…VLVL) and 449-469 (LVPW…LLFL). An N-linked (GlcNAc...) asparagine glycan is attached at Asn-483. 4 helical membrane-spanning segments follow: residues 545–565 (VIGF…VLAF), 592–612 (VYYH…CKII), 691–711 (VTGF…AAVT), and 728–748 (FVPA…FFSV).

This sequence belongs to the CTL (choline transporter-like) family.

It localises to the membrane. The sequence is that of Choline transporter-like 2 from Anopheles gambiae (African malaria mosquito).